The following is a 157-amino-acid chain: Transcription elongation factor GreA (157 aa).

It belongs to the GreA/GreB family.

Functionally, necessary for efficient RNA polymerase transcription elongation past template-encoded arresting sites. The arresting sites in DNA have the property of trapping a certain fraction of elongating RNA polymerases that pass through, resulting in locked ternary complexes. Cleavage of the nascent transcript by cleavage factors such as GreA or GreB allows the resumption of elongation from the new 3'terminus. GreA releases sequences of 2 to 3 nucleotides. This Azorhizobium caulinodans (strain ATCC 43989 / DSM 5975 / JCM 20966 / LMG 6465 / NBRC 14845 / NCIMB 13405 / ORS 571) protein is Transcription elongation factor GreA.